A 257-amino-acid polypeptide reads, in one-letter code: Hydroxyacylglutathione hydrolase (257 aa).

His54, His56, Asp58, His59, His113, Asp137, and His175 together coordinate Zn(2+).

This sequence belongs to the metallo-beta-lactamase superfamily. Glyoxalase II family. In terms of assembly, monomer. Requires Zn(2+) as cofactor.

It catalyses the reaction an S-(2-hydroxyacyl)glutathione + H2O = a 2-hydroxy carboxylate + glutathione + H(+). Its pathway is secondary metabolite metabolism; methylglyoxal degradation; (R)-lactate from methylglyoxal: step 2/2. In terms of biological role, thiolesterase that catalyzes the hydrolysis of S-D-lactoyl-glutathione to form glutathione and D-lactic acid. This is Hydroxyacylglutathione hydrolase from Crocosphaera subtropica (strain ATCC 51142 / BH68) (Cyanothece sp. (strain ATCC 51142)).